Here is a 94-residue protein sequence, read N- to C-terminus: Large ribosomal subunit protein bL31 (94 aa).

Positions tyrosine 65–serine 94 are disordered. Residues serine 74 to serine 94 are compositionally biased toward basic and acidic residues.

It belongs to the bacterial ribosomal protein bL31 family. Type A subfamily. Part of the 50S ribosomal subunit.

Its function is as follows. Binds the 23S rRNA. In Prochlorococcus marinus (strain MIT 9211), this protein is Large ribosomal subunit protein bL31.